Here is a 794-residue protein sequence, read N- to C-terminus: Ubiquitin carboxyl-terminal hydrolase 10 (794 aa).

Ala2 is subject to N-acetylalanine. An interaction with p53/TP53 region spans residues 2-99 (ALHNPQYIFG…ILGCPTSKKT (98 aa)). The G3BP1-binding stretch occupies residues 6–21 (PQYIFGDFSPDEFNQF). A phosphothreonine mark is found at Thr24 and Thr99. The interval 123 to 164 (ESSSNAEAETLENDSGAGGLGQRERKKKKKRPPGYYSYLKDG) is disordered. Ser209, Ser224, and Ser316 each carry phosphoserine. A disordered region spans residues 303–326 (ESADLDPAKPESQSPPAESALSVS). Polar residues predominate over residues 313-326 (ESQSPPAESALSVS). Ser332 carries the post-translational modification Phosphoserine; by ATM. A phosphoserine mark is found at Ser361 and Ser366. One can recognise a USP domain in the interval 411–791 (RGLINKGNWC…TAYLLYYRRV (381 aa)). Cys420 serves as the catalytic Nucleophile. Ser543 is subject to Phosphoserine. Residues 546–588 (HEKHSVSNGPGSHLIEDEELEDTGEGSEDEWEQVGPKNKTSVT) are disordered. Residues 561-577 (EDEELEDTGEGSEDEWE) show a composition bias toward acidic residues. Thr568 is subject to Phosphothreonine. Ser572 bears the Phosphoserine mark. His745 serves as the catalytic Proton acceptor.

The protein belongs to the peptidase C19 family. USP10 subfamily. Found in a deubiquitination complex with TANK, USP10 and ZC3H12A; this complex inhibits genotoxic stress- or interleukin-1-beta (IL1B)-mediated NF-kappa-B activation by promoting IKBKG or TRAF6 deubiquitination. Interacts with IKBKG; this interaction increases in response to DNA damage. Interacts with TANK; this interaction increases in response to DNA damage. Interacts with TRAF6; this interaction increases in response to DNA damage. Interacts with ZC3H12A; this interaction increases in response to DNA damage. Interacts with G3BP1 (via NTF2 domain) and G3BP2 (via NTF2 domain); inhibiting stress granule formation. In terms of processing, phosphorylated by ATM following DNA damage, leading to stabilization and translocation it to the nucleus. Ubiquitinated. Deubiquitinated by USP13.

The protein localises to the cytoplasm. It is found in the nucleus. It localises to the early endosome. The catalysed reaction is Thiol-dependent hydrolysis of ester, thioester, amide, peptide and isopeptide bonds formed by the C-terminal Gly of ubiquitin (a 76-residue protein attached to proteins as an intracellular targeting signal).. Specifically inhibited by spautin-1 (specific and potent autophagy inhibitor-1), a derivative of MBCQ that binds to USP10 and inhibits deubiquitinase activity. Regulated by PIK3C3/VPS34-containing complexes. Its function is as follows. Hydrolase that can remove conjugated ubiquitin from target proteins such as p53/TP53, RPS2/us5, RPS3/us3, RPS10/eS10, BECN1, SNX3 and CFTR. Acts as an essential regulator of p53/TP53 stability: in unstressed cells, specifically deubiquitinates p53/TP53 in the cytoplasm, leading to counteract MDM2 action and stabilize p53/TP53. Following DNA damage, translocates to the nucleus and deubiquitinates p53/TP53, leading to regulate the p53/TP53-dependent DNA damage response. Component of a regulatory loop that controls autophagy and p53/TP53 levels: mediates deubiquitination of BECN1, a key regulator of autophagy, leading to stabilize the PIK3C3/VPS34-containing complexes. In turn, PIK3C3/VPS34-containing complexes regulate USP10 stability, suggesting the existence of a regulatory system by which PIK3C3/VPS34-containing complexes regulate p53/TP53 protein levels via USP10 and USP13. Does not deubiquitinate MDM2. Plays a key role in 40S ribosome subunit recycling when a ribosome has stalled during translation: acts both by inhibiting formation of stress granules, which store stalled translation pre-initiation complexes, and mediating deubiquitination of 40S ribosome subunits. Acts as a negative regulator of stress granules formation by lowering G3BP1 and G3BP2 valence, thereby preventing G3BP1 and G3BP2 ability to undergo liquid-liquid phase separation (LLPS) and assembly of stress granules. Promotes 40S ribosome subunit recycling following ribosome dissociation in response to ribosome stalling by mediating deubiquitination of 40S ribosomal proteins RPS2/us5, RPS3/us3 and RPS10/eS10, thereby preventing their degradation by the proteasome. Part of a ribosome quality control that takes place when ribosomes have stalled during translation initiation (iRQC): USP10 acts by removing monoubiquitination of RPS2/us5 and RPS3/us3, promoting 40S ribosomal subunit recycling. Deubiquitinates CFTR in early endosomes, enhancing its endocytic recycling. Involved in a TANK-dependent negative feedback response to attenuate NF-kappa-B activation via deubiquitinating IKBKG or TRAF6 in response to interleukin-1-beta (IL1B) stimulation or upon DNA damage. Deubiquitinates TBX21 leading to its stabilization. Plays a negative role in the RLR signaling pathway upon RNA virus infection by blocking the RIGI-mediated MAVS activation. Mechanistically, removes the unanchored 'Lys-63'-linked polyubiquitin chains of MAVS to inhibit its aggregation, essential for its activation. In Rattus norvegicus (Rat), this protein is Ubiquitin carboxyl-terminal hydrolase 10 (Usp10).